A 298-amino-acid chain; its full sequence is N-acetylmuramic acid 6-phosphate etherase (298 aa).

Positions 55–218 (IHTQVSGGGR…STGLMIKSGK (164 aa)) constitute an SIS domain. Glutamate 83 functions as the Proton donor in the catalytic mechanism. The active site involves glutamate 114.

Belongs to the GCKR-like family. MurNAc-6-P etherase subfamily. In terms of assembly, homodimer.

It catalyses the reaction N-acetyl-D-muramate 6-phosphate + H2O = N-acetyl-D-glucosamine 6-phosphate + (R)-lactate. It participates in amino-sugar metabolism; 1,6-anhydro-N-acetylmuramate degradation. It functions in the pathway amino-sugar metabolism; N-acetylmuramate degradation. Its pathway is cell wall biogenesis; peptidoglycan recycling. Its function is as follows. Specifically catalyzes the cleavage of the D-lactyl ether substituent of MurNAc 6-phosphate, producing GlcNAc 6-phosphate and D-lactate. Together with AnmK, is also required for the utilization of anhydro-N-acetylmuramic acid (anhMurNAc) either imported from the medium or derived from its own cell wall murein, and thus plays a role in cell wall recycling. The protein is N-acetylmuramic acid 6-phosphate etherase of Escherichia coli O1:K1 / APEC.